The sequence spans 212 residues: Orotate phosphoribosyltransferase (212 aa).

Residues Arg97, Lys101, His103, and 123-131 (EDLISTGGS) contribute to the 5-phospho-alpha-D-ribose 1-diphosphate site. Orotate is bound at residue Ser127.

Belongs to the purine/pyrimidine phosphoribosyltransferase family. PyrE subfamily. As to quaternary structure, homodimer. It depends on Mg(2+) as a cofactor.

The catalysed reaction is orotidine 5'-phosphate + diphosphate = orotate + 5-phospho-alpha-D-ribose 1-diphosphate. The protein operates within pyrimidine metabolism; UMP biosynthesis via de novo pathway; UMP from orotate: step 1/2. Its function is as follows. Catalyzes the transfer of a ribosyl phosphate group from 5-phosphoribose 1-diphosphate to orotate, leading to the formation of orotidine monophosphate (OMP). The polypeptide is Orotate phosphoribosyltransferase (Bacteroides thetaiotaomicron (strain ATCC 29148 / DSM 2079 / JCM 5827 / CCUG 10774 / NCTC 10582 / VPI-5482 / E50)).